Consider the following 154-residue polypeptide: Protein-export protein SecB (154 aa).

It belongs to the SecB family. In terms of assembly, homotetramer, a dimer of dimers. One homotetramer interacts with 1 SecA dimer.

The protein localises to the cytoplasm. Functionally, one of the proteins required for the normal export of preproteins out of the cell cytoplasm. It is a molecular chaperone that binds to a subset of precursor proteins, maintaining them in a translocation-competent state. It also specifically binds to its receptor SecA. This is Protein-export protein SecB from Blochmanniella pennsylvanica (strain BPEN).